Here is a 357-residue protein sequence, read N- to C-terminus: UPF0283 membrane protein BAbS19_I09770 (357 aa).

The disordered stretch occupies residues 1–36 (MSDKTPRKPTAFRLEQPARVSAASEQEEPRRPRAVK). The span at 27–36 (EEPRRPRAVK) shows a compositional bias: basic and acidic residues. 2 consecutive transmembrane segments (helical) span residues 78–98 (ILFG…TEDL) and 109–129 (LGWT…AIIL).

Belongs to the UPF0283 family.

It localises to the cell inner membrane. This is UPF0283 membrane protein BAbS19_I09770 from Brucella abortus (strain S19).